The following is a 941-amino-acid chain: Zinc finger protein su(Hw) (941 aa).

2 disordered regions span residues M1–A97 and E176–Q211. Over residues S47 to S57 the composition is skewed to low complexity. A compositionally biased stretch (acidic residues) spans V185–D202. T186 is subject to Phosphothreonine. The segment at H220 to C242 adopts a C2H2-type 1; atypical zinc-finger fold. The C2H2-type 2 zinc finger occupies I290 to H313. The C2H2-type 3; atypical zinc finger occupies F319 to H341. 9 consecutive C2H2-type zinc fingers follow at residues Y348–H366, M380–H402, Y413–H435, F441–H463, Y469–H491, H497–H519, F523–H545, F553–H577, and T596–H619. The interaction with mod(mdg4) stretch occupies residues I760–L860. Positions D864–A941 are disordered. 2 stretches are compositionally biased toward basic and acidic residues: residues G869 to D880 and K891 to A941.

Component of the gypsy chromatin insulator complex, composed of Cp190, mod(mdg4) and su(Hw). The gypsy chromatin insulator complex interacts with Topors via mod(mdg4) and su(Hw). Upon ecdysone stimulation, interacts with Nup98.

The protein resides in the nucleus. It localises to the chromosome. Its function is as follows. Component of the gypsy chromatin insulator complex which is required for the function of the gypsy chromatin insulator and other endogenous chromatin insulators. Chromatin insulators are regulatory elements which establish independent domains of transcriptional activity within eukaryotic genomes. Insulators have two defining properties; they can block the communication between an enhancer and a promoter when placed between them and can also buffer transgenes from position effect variegation (PEV). Insulators are proposed to structure the chromatin fiber into independent domains of differing transcriptional potential by promoting the formation of distinct chromatin loops. This chromatin looping may involve the formation of insulator bodies, where homotypic interactions between individual subunits of the insulator complex could promote the clustering of widely spaced insulators at the nuclear periphery. Within the gypsy insulator complex, this protein binds specifically to a region of the gypsy element located 3' of the 5' long terminal repeat (LTR), and may also mediate interaction with other endogenous insulators at sites distinct from those recognized by Cp190. Cooperates with pita and cliff to recruit Cp190 and regulate insulator function at the front-ultraabdominal (Fub) boundary. This Drosophila melanogaster (Fruit fly) protein is Zinc finger protein su(Hw).